A 399-amino-acid polypeptide reads, in one-letter code: MGFLSSAILLLITAFPAAQAGEMINAAAGATDVIPDSYIVVMNEGISESDFESHRTWATSMNSKSRKRAGAFSGVSRTWSATGMKGYSGSFARETIEQIANNSAVAYVEPDRMVNITAFVTQRNAPSYGLGRISNKRPGNRDYIFDESAGRGITIYGVDTGIDIRHPEFEGRATWGTNEINDVNQDENGHGTHTAGTFAGRNFGVAKRANIVAVKVLNAEGSGSTSGIISGINWCVDHARRNNILGRAVMNLSLGGTGARAFNQVATNAANAGIFLAVAAGNDGEDAANTSPASARGVCTVSASTERDTRADFSNFGSVVDIYAPGDQIPSVFPNNARRVLSGTSMAAPHVAGVGAYLMALEGISSGQVCNRIKRLSQPRIRNPGRDTTNRLLYNNSGV.

The N-terminal stretch at 1–20 (MGFLSSAILLLITAFPAAQA) is a signal peptide. Positions 21-117 (GEMINAAAGA…VEPDRMVNIT (97 aa)) are excised as a propeptide. The Inhibitor I9 domain maps to 37-116 (SYIVVMNEGI…YVEPDRMVNI (80 aa)). N-linked (GlcNAc...) asparagine glycosylation occurs at Asn115. The Peptidase S8 domain occupies 127 to 399 (SYGLGRISNK…NRLLYNNSGV (273 aa)). Active-site charge relay system residues include Asp159 and His190. An N-linked (GlcNAc...) asparagine glycan is attached at Asn251. Ser345 acts as the Charge relay system in catalysis. An N-linked (GlcNAc...) asparagine glycan is attached at Asn395.

Belongs to the peptidase S8 family.

It localises to the secreted. Secreted subtilisin-like serine protease with keratinolytic activity that contributes to pathogenicity. The polypeptide is Subtilisin-like protease CPC735_033790 (Coccidioides posadasii (strain C735) (Valley fever fungus)).